Here is a 64-residue protein sequence, read N- to C-terminus: Translational regulator CsrA (64 aa).

This sequence belongs to the CsrA/RsmA family. Homodimer; the beta-strands of each monomer intercalate to form a hydrophobic core, while the alpha-helices form wings that extend away from the core.

Its subcellular location is the cytoplasm. In terms of biological role, a key translational regulator that binds mRNA to regulate translation initiation and/or mRNA stability. Mediates global changes in gene expression, shifting from rapid growth to stress survival by linking envelope stress, the stringent response and the catabolite repression systems. Usually binds in the 5'-UTR; binding at or near the Shine-Dalgarno sequence prevents ribosome-binding, repressing translation, binding elsewhere in the 5'-UTR can activate translation and/or stabilize the mRNA. Its function is antagonized by small RNA(s). The sequence is that of Translational regulator CsrA from Dichelobacter nodosus (strain VCS1703A).